We begin with the raw amino-acid sequence, 118 residues long: Holo-[acyl-carrier-protein] synthase (118 aa).

The Mg(2+) site is built by aspartate 9 and glutamate 52.

It belongs to the P-Pant transferase superfamily. AcpS family. It depends on Mg(2+) as a cofactor.

The protein resides in the cytoplasm. It catalyses the reaction apo-[ACP] + CoA = holo-[ACP] + adenosine 3',5'-bisphosphate + H(+). Functionally, transfers the 4'-phosphopantetheine moiety from coenzyme A to a Ser of acyl-carrier-protein. In Frankia alni (strain DSM 45986 / CECT 9034 / ACN14a), this protein is Holo-[acyl-carrier-protein] synthase.